A 128-amino-acid chain; its full sequence is MSNVPADLKYASSHEWVRADGDGVYSVGITEHAQELLGDMVFVDLPEVGSEVSAGSDCAVAESVKAASDIYAPISGEIIAVNAELESSPELVNSAPYTDGWLFSIKASDESELDSLLDAEAYLATIEE.

The region spanning 24–106 is the Lipoyl-binding domain; that stretch reads VYSVGITEHA…YTDGWLFSIK (83 aa). K65 carries the N6-lipoyllysine modification.

This sequence belongs to the GcvH family. In terms of assembly, the glycine cleavage system is composed of four proteins: P, T, L and H. The cofactor is (R)-lipoate.

The glycine cleavage system catalyzes the degradation of glycine. The H protein shuttles the methylamine group of glycine from the P protein to the T protein. The polypeptide is Glycine cleavage system H protein (Yersinia enterocolitica serotype O:8 / biotype 1B (strain NCTC 13174 / 8081)).